The chain runs to 65 residues: Large ribosomal subunit protein uL29 (65 aa).

It belongs to the universal ribosomal protein uL29 family.

In Mycoplasmopsis synoviae (strain 53) (Mycoplasma synoviae), this protein is Large ribosomal subunit protein uL29.